The following is a 1070-amino-acid chain: Carbamoyl phosphate synthase large chain (1070 aa).

The interval 1-401 (MPKRDDIKTI…ALLKAVRSLE (401 aa)) is carboxyphosphate synthetic domain. The ATP site is built by arginine 129, arginine 169, glycine 175, glycine 176, lysine 208, isoleucine 210, glutamate 215, glycine 241, isoleucine 242, histidine 243, glutamine 284, and glutamate 298. The ATP-grasp 1 domain maps to 133–327 (RDLMNELGEP…IAKLAAKIAV (195 aa)). 3 residues coordinate Mg(2+): glutamine 284, glutamate 298, and asparagine 300. Residues glutamine 284, glutamate 298, and asparagine 300 each contribute to the Mn(2+) site. The tract at residues 402-546 (IGADHLLLEE…YSTYEEENES (145 aa)) is oligomerization domain. The interval 547–929 (TRSAKESVIV…ALYKGFVASG (383 aa)) is carbamoyl phosphate synthetic domain. The region spanning 671–861 (EKALGILQIP…MANVATRVIL (191 aa)) is the ATP-grasp 2 domain. ATP contacts are provided by arginine 707, arginine 746, valine 748, glutamate 752, glycine 777, valine 778, histidine 779, serine 780, glutamine 820, and glutamate 832. Mg(2+) contacts are provided by glutamine 820, glutamate 832, and asparagine 834. The Mn(2+) site is built by glutamine 820, glutamate 832, and asparagine 834. One can recognise an MGS-like domain in the interval 930 to 1070 (TTMHDYGTVL…SEVKQPKARV (141 aa)). The interval 930 to 1070 (TTMHDYGTVL…SEVKQPKARV (141 aa)) is allosteric domain.

Belongs to the CarB family. Composed of two chains; the small (or glutamine) chain promotes the hydrolysis of glutamine to ammonia, which is used by the large (or ammonia) chain to synthesize carbamoyl phosphate. Tetramer of heterodimers (alpha,beta)4. Requires Mg(2+) as cofactor. The cofactor is Mn(2+).

It carries out the reaction hydrogencarbonate + L-glutamine + 2 ATP + H2O = carbamoyl phosphate + L-glutamate + 2 ADP + phosphate + 2 H(+). It catalyses the reaction hydrogencarbonate + NH4(+) + 2 ATP = carbamoyl phosphate + 2 ADP + phosphate + 2 H(+). Its pathway is amino-acid biosynthesis; L-arginine biosynthesis; carbamoyl phosphate from bicarbonate: step 1/1. It functions in the pathway pyrimidine metabolism; UMP biosynthesis via de novo pathway; (S)-dihydroorotate from bicarbonate: step 1/3. In terms of biological role, large subunit of the glutamine-dependent carbamoyl phosphate synthetase (CPSase). CPSase catalyzes the formation of carbamoyl phosphate from the ammonia moiety of glutamine, carbonate, and phosphate donated by ATP, constituting the first step of 2 biosynthetic pathways, one leading to arginine and/or urea and the other to pyrimidine nucleotides. The large subunit (synthetase) binds the substrates ammonia (free or transferred from glutamine from the small subunit), hydrogencarbonate and ATP and carries out an ATP-coupled ligase reaction, activating hydrogencarbonate by forming carboxy phosphate which reacts with ammonia to form carbamoyl phosphate. This Listeria monocytogenes serotype 4b (strain CLIP80459) protein is Carbamoyl phosphate synthase large chain.